A 155-amino-acid polypeptide reads, in one-letter code: 6,7-dimethyl-8-ribityllumazine synthase (155 aa).

5-amino-6-(D-ribitylamino)uracil is bound by residues Phe-24, 58–60 (AFE), and 82–84 (AII). 87–88 (AT) is a (2S)-2-hydroxy-3-oxobutyl phosphate binding site. Residue His-90 is the Proton donor of the active site. Residue Phe-115 participates in 5-amino-6-(D-ribitylamino)uracil binding. Position 129 (Arg-129) interacts with (2S)-2-hydroxy-3-oxobutyl phosphate.

It belongs to the DMRL synthase family.

It catalyses the reaction (2S)-2-hydroxy-3-oxobutyl phosphate + 5-amino-6-(D-ribitylamino)uracil = 6,7-dimethyl-8-(1-D-ribityl)lumazine + phosphate + 2 H2O + H(+). The protein operates within cofactor biosynthesis; riboflavin biosynthesis; riboflavin from 2-hydroxy-3-oxobutyl phosphate and 5-amino-6-(D-ribitylamino)uracil: step 1/2. Catalyzes the formation of 6,7-dimethyl-8-ribityllumazine by condensation of 5-amino-6-(D-ribitylamino)uracil with 3,4-dihydroxy-2-butanone 4-phosphate. This is the penultimate step in the biosynthesis of riboflavin. The chain is 6,7-dimethyl-8-ribityllumazine synthase from Prosthecochloris aestuarii (strain DSM 271 / SK 413).